The sequence spans 252 residues: Major prion protein (252 aa).

Positions 1-22 are cleaved as a signal peptide; it reads MANLGCWMLVLFVATWSDLGLC. The tract at residues 23-38 is interaction with ADGRG6; the sequence is KKRPKPGGWNTGGSRY. The interval 23–229 is interaction with GRB2, ERI3 and SYN1; that stretch reads KKRPKPGGWN…ESQAYYQRGS (207 aa). The segment at 26-106 is disordered; that stretch reads PKPGGWNTGG…QWNKPSKPKT (81 aa). 5 tandem repeats follow at residues 51–58, 59–66, 67–74, 75–82, and 83–90. The tract at residues 51–90 is 5 X 8 AA tandem repeats of P-H-G-G-G-W-G-Q; that stretch reads PQGGGWGQPHGGGWGQPHGGGWGQPHGGSWGQPHGGGWGQ. Positions 52–94 are enriched in gly residues; sequence QGGGWGQPHGGGWGQPHGGGWGQPHGGSWGQPHGGGWGQGGGT. His-60, Gly-61, Gly-62, His-68, Gly-69, Gly-70, His-76, Gly-77, Gly-78, His-84, Gly-85, and Gly-86 together coordinate Cu(2+). Residues Cys-178 and Cys-213 are joined by a disulfide bond. N-linked (GlcNAc...) asparagine glycosylation is found at Asn-180 and Asn-196. Ser-229 carries GPI-anchor amidated serine lipidation. A propeptide spans 230–252 (removed in mature form); that stretch reads SMVLFSSPPVILLISFLIFLIVG.

It belongs to the prion family. In terms of assembly, monomer and homodimer. Has a tendency to aggregate into amyloid fibrils containing a cross-beta spine, formed by a steric zipper of superposed beta-strands. Soluble oligomers may represent an intermediate stage on the path to fibril formation. Copper binding may promote oligomerization. Interacts with GRB2, APP, ERI3/PRNPIP and SYN1. Mislocalized cytosolically exposed PrP interacts with MGRN1; this interaction alters MGRN1 subcellular location and causes lysosomal enlargement. Interacts with APP. Interacts with KIAA1191. Interacts with ADGRG6.

It is found in the cell membrane. The protein resides in the golgi apparatus. In terms of biological role, its primary physiological function is unclear. May play a role in neuronal development and synaptic plasticity. May be required for neuronal myelin sheath maintenance. May promote myelin homeostasis through acting as an agonist for ADGRG6 receptor. May play a role in iron uptake and iron homeostasis. Soluble oligomers are toxic to cultured neuroblastoma cells and induce apoptosis (in vitro). Association with GPC1 (via its heparan sulfate chains) targets PRNP to lipid rafts. Also provides Cu(2+) or Zn(2+) for the ascorbate-mediated GPC1 deaminase degradation of its heparan sulfate side chains. The sequence is that of Major prion protein (PRNP) from Sapajus apella (Brown-capped capuchin).